The sequence spans 282 residues: Hydrogenase expression/formation protein HoxQ (282 aa).

The protein belongs to the HupH/HyaF family.

In Cupriavidus necator (strain ATCC 17699 / DSM 428 / KCTC 22496 / NCIMB 10442 / H16 / Stanier 337) (Ralstonia eutropha), this protein is Hydrogenase expression/formation protein HoxQ (hoxQ).